The primary structure comprises 120 residues: Prefoldin subunit beta (120 aa).

This sequence belongs to the prefoldin subunit beta family. In terms of assembly, heterohexamer of two alpha and four beta subunits.

The protein localises to the cytoplasm. Molecular chaperone capable of stabilizing a range of proteins. Seems to fulfill an ATP-independent, HSP70-like function in archaeal de novo protein folding. This chain is Prefoldin subunit beta, found in Methanospirillum hungatei JF-1 (strain ATCC 27890 / DSM 864 / NBRC 100397 / JF-1).